Here is a 385-residue protein sequence, read N- to C-terminus: DnaJ homolog subfamily C member 28 (385 aa).

One can recognise a J domain in the interval 48 to 132; that stretch reads EYYRLLNLDE…EGKFKYNTPQ (85 aa). Residues 261 to 318 are a coiled coil; sequence KEIKDTIEQLREALLMSRKKLGNPLSPTEQKQWAQVCEQFQEKIRKLNKRINDFNLIV.

May have a role in protein folding or as a chaperone. This is DnaJ homolog subfamily C member 28 (Dnajc28) from Mus musculus (Mouse).